The chain runs to 206 residues: Large ribosomal subunit protein uL4 (206 aa).

Positions 47–94 (NRAQKDRSEINKSTKKPFRQKGTGRARAGRASSPLWRGGGKVFPNSPD) are disordered. Residues 49–58 (AQKDRSEINK) show a composition bias toward basic and acidic residues. Over residues 59–74 (STKKPFRQKGTGRARA) the composition is skewed to basic residues.

Belongs to the universal ribosomal protein uL4 family. As to quaternary structure, part of the 50S ribosomal subunit.

One of the primary rRNA binding proteins, this protein initially binds near the 5'-end of the 23S rRNA. It is important during the early stages of 50S assembly. It makes multiple contacts with different domains of the 23S rRNA in the assembled 50S subunit and ribosome. Its function is as follows. Forms part of the polypeptide exit tunnel. In Laribacter hongkongensis (strain HLHK9), this protein is Large ribosomal subunit protein uL4.